Reading from the N-terminus, the 602-residue chain is Elongation factor 4 (602 aa).

Residues 8-189 (KNIRNFSIIA…KIITTIPAPS (182 aa)) form the tr-type G domain. Residues 20-25 (DHGKST) and 136-139 (NKID) each bind GTP.

It belongs to the TRAFAC class translation factor GTPase superfamily. Classic translation factor GTPase family. LepA subfamily.

It localises to the cell inner membrane. It carries out the reaction GTP + H2O = GDP + phosphate + H(+). Its function is as follows. Required for accurate and efficient protein synthesis under certain stress conditions. May act as a fidelity factor of the translation reaction, by catalyzing a one-codon backward translocation of tRNAs on improperly translocated ribosomes. Back-translocation proceeds from a post-translocation (POST) complex to a pre-translocation (PRE) complex, thus giving elongation factor G a second chance to translocate the tRNAs correctly. Binds to ribosomes in a GTP-dependent manner. The protein is Elongation factor 4 of Helicobacter pylori (strain HPAG1).